The chain runs to 228 residues: 7-cyano-7-deazaguanine synthase (228 aa).

Residue 9 to 19 participates in ATP binding; that stretch reads LSGGPDSTTVL. The Zn(2+) site is built by cysteine 193, cysteine 203, cysteine 206, and cysteine 209.

The protein belongs to the QueC family. The cofactor is Zn(2+).

It carries out the reaction 7-carboxy-7-deazaguanine + NH4(+) + ATP = 7-cyano-7-deazaguanine + ADP + phosphate + H2O + H(+). It participates in purine metabolism; 7-cyano-7-deazaguanine biosynthesis. Catalyzes the ATP-dependent conversion of 7-carboxy-7-deazaguanine (CDG) to 7-cyano-7-deazaguanine (preQ(0)). The chain is 7-cyano-7-deazaguanine synthase from Rickettsia africae (strain ESF-5).